The following is a 778-amino-acid chain: Ral guanine nucleotide dissociation stimulator-like 2 (778 aa).

Residues 1 to 15 (MLPRPLRLLLDTTPP) are compositionally biased toward low complexity. The segment at 1–59 (MLPRPLRLLLDTTPPGGVVLSSFRSRDPEEGGDPGGRAVGGGQEEEDEEEEEASVSVWD) is disordered. The segment covering 33 to 42 (DPGGRAVGGG) has biased composition (gly residues). Acidic residues predominate over residues 43-59 (QEEEDEEEEEASVSVWD). One can recognise an N-terminal Ras-GEF domain in the interval 88 to 212 (SSRRLRAGTL…GSADLIRNLR (125 aa)). One can recognise a Ras-GEF domain in the interval 243–513 (LADHLAEQLT…HRVSCEVEPP (271 aa)). Disordered stretches follow at residues 503 to 524 (SHRV…ARTP), 541 to 564 (GGPT…GTPA), 581 to 647 (SLDS…GPGS), and 735 to 769 (RRPS…IKAT). Residues 581 to 592 (SLDSALESSPSL) are compositionally biased toward low complexity. Over residues 620-632 (CGSPLSGNTGEGT) the composition is skewed to polar residues. In terms of domain architecture, Ras-associating spans 649-736 (DCRIIRVQME…HDFLLRQRRR (88 aa)). Low complexity predominate over residues 738–756 (SAATPGSHSGPSASGTPPS).

In terms of assembly, interacts with SAMD9.

Probable guanine nucleotide exchange factor. Putative effector of Ras and/or Rap. Associates with the GTP-bound form of Rap 1A and H-Ras in vitro. The polypeptide is Ral guanine nucleotide dissociation stimulator-like 2 (Rgl2) (Mus musculus (Mouse)).